Here is a 169-residue protein sequence, read N- to C-terminus: Photosystem I assembly protein Ycf3 (169 aa).

TPR repeat units lie at residues 35 to 68, 72 to 105, and 120 to 153; these read AFTY…EIDP, SYIL…NPSL, and GEQA…APGN.

It belongs to the Ycf3 family.

It is found in the plastid. Its subcellular location is the chloroplast thylakoid membrane. Functionally, essential for the assembly of the photosystem I (PSI) complex. May act as a chaperone-like factor to guide the assembly of the PSI subunits. The chain is Photosystem I assembly protein Ycf3 from Huperzia lucidula (Shining clubmoss).